Consider the following 388-residue polypeptide: Beta-hexosaminidase LpqI (388 aa).

The N-terminal stretch at 1-19 (MAFPRTLAILAAAAALVVA) is a signal peptide. C20 is lipidated: N-palmitoyl cysteine. C20 is lipidated: S-diacylglycerol cysteine. Substrate is bound by residues D123, R131, R193, and 223 to 224 (KH). Catalysis depends on H236, which acts as the Proton donor/acceptor. The active-site Nucleophile is D311.

Belongs to the glycosyl hydrolase 3 family.

The protein resides in the cell inner membrane. The catalysed reaction is Hydrolysis of terminal non-reducing N-acetyl-D-hexosamine residues in N-acetyl-beta-D-hexosaminides.. The protein operates within cell wall biogenesis; peptidoglycan recycling. Its function is as follows. Plays a role in peptidoglycan recycling by cleaving the terminal beta-1,4-linked N-acetylglucosamine (GlcNAc) from peptidoglycan fragments. Acts as a regulator for GlcNAc-MurNAc levels by cleaving disaccharides and allowing the breakdown of MurNAc. This chain is Beta-hexosaminidase LpqI, found in Mycobacterium bovis (strain BCG / Pasteur 1173P2).